Consider the following 436-residue polypeptide: MLDIKVIRENLDWSKKKLATRGIKPEELDKLVAIDKERREALTKSEQLKQKRNEVSDQIAQAKRNKEDASDAIKAMREVGKEIKDLDKEVEDLTQKQNYILLRLPNFPADSDPIGPDESYNEEVRKWHEPTKLDFEPKPHWEIGTELNILDWDTAAKVSGARFVYYKGAGALLERAVSNFFLDENTKDGYTEVIPPYLVNDASMQGTGQFPKFTEDVYTIVDNDDPDKPRDLTLIPTAEVPLVNYFRGKILDGEQLPINVTAFSPAFRSEAGSAGRDTRGLIRMHEFRKVEMVKIVDEESSWDELEKLTHNAEHLLQKLGLPYHVVALSTGDASFTSAKTYDLEVWMPAQDKYREISSCSNCTDFQARRSLIRYRDENGKLHLAHTLNGSGLAVGRTVAAILENYQNEDGTVNVPEALQPYMHGMKVITKEPKFGE.

The span at 43–55 (TKSEQLKQKRNEV) shows a compositional bias: basic and acidic residues. A disordered region spans residues 43–68 (TKSEQLKQKRNEVSDQIAQAKRNKED). 237–239 (TAE) contributes to the L-serine binding site. An ATP-binding site is contributed by 268 to 270 (RSE). L-serine is bound at residue glutamate 291. 355 to 358 (EISS) lines the ATP pocket. An L-serine-binding site is contributed by serine 390.

It belongs to the class-II aminoacyl-tRNA synthetase family. Type-1 seryl-tRNA synthetase subfamily. As to quaternary structure, homodimer. The tRNA molecule binds across the dimer.

Its subcellular location is the cytoplasm. It carries out the reaction tRNA(Ser) + L-serine + ATP = L-seryl-tRNA(Ser) + AMP + diphosphate + H(+). It catalyses the reaction tRNA(Sec) + L-serine + ATP = L-seryl-tRNA(Sec) + AMP + diphosphate + H(+). It participates in aminoacyl-tRNA biosynthesis; selenocysteinyl-tRNA(Sec) biosynthesis; L-seryl-tRNA(Sec) from L-serine and tRNA(Sec): step 1/1. In terms of biological role, catalyzes the attachment of serine to tRNA(Ser). Is also able to aminoacylate tRNA(Sec) with serine, to form the misacylated tRNA L-seryl-tRNA(Sec), which will be further converted into selenocysteinyl-tRNA(Sec). The chain is Serine--tRNA ligase from Lactobacillus johnsonii (strain CNCM I-12250 / La1 / NCC 533).